The sequence spans 76 residues: Conopeptide X11.1 (76 aa).

The N-terminal stretch at 1–20 is a signal peptide; it reads MMKLSVSFLLLLMLLPFITG. Residues 21-39 constitute a propeptide that is removed on maturation; the sequence is EENSDSDVLKSGAAVRQGR. Cystine bridges form between Cys-42–Cys-56, Cys-49–Cys-61, Cys-55–Cys-66, and Cys-60–Cys-73.

Expressed by the venom duct.

The protein localises to the secreted. Antimicrobial peptide that potently inhibits growth of Mycobacterium tuberculosis (H37Rv strain) (MIC=3 uM). This chain is Conopeptide X11.1, found in Conasprella ximenes (Interrupted cone).